We begin with the raw amino-acid sequence, 376 residues long: Chaperone protein DnaJ (376 aa).

The J domain occupies 5 to 70 (DYYEVLGVAK…QKRAAYDQYG (66 aa)). The segment at 136–214 (GYDTQIRVPS…CHGSGKVKET (79 aa)) adopts a CR-type zinc-finger fold. Residues Cys-149, Cys-152, Cys-166, Cys-169, Cys-188, Cys-191, Cys-202, and Cys-205 each contribute to the Zn(2+) site. CXXCXGXG motif repeat units lie at residues 149–156 (CGVCHGSG), 166–173 (CPTCHGQG), 188–195 (CPKCHGTG), and 202–209 (CAHCHGSG).

The protein belongs to the DnaJ family. Homodimer. Zn(2+) serves as cofactor.

It localises to the cytoplasm. In terms of biological role, participates actively in the response to hyperosmotic and heat shock by preventing the aggregation of stress-denatured proteins and by disaggregating proteins, also in an autonomous, DnaK-independent fashion. Unfolded proteins bind initially to DnaJ; upon interaction with the DnaJ-bound protein, DnaK hydrolyzes its bound ATP, resulting in the formation of a stable complex. GrpE releases ADP from DnaK; ATP binding to DnaK triggers the release of the substrate protein, thus completing the reaction cycle. Several rounds of ATP-dependent interactions between DnaJ, DnaK and GrpE are required for fully efficient folding. Also involved, together with DnaK and GrpE, in the DNA replication of plasmids through activation of initiation proteins. The polypeptide is Chaperone protein DnaJ (Burkholderia mallei (strain NCTC 10229)).